A 273-amino-acid chain; its full sequence is DNA repair protein RecO (273 aa).

A disordered region spans residues 250 to 273 (NVGQNPSGKDDLNERRDVDGTGES). The segment covering 257–273 (GKDDLNERRDVDGTGES) has biased composition (basic and acidic residues).

It belongs to the RecO family.

In terms of biological role, involved in DNA repair and RecF pathway recombination. In Desulfitobacterium hafniense (strain Y51), this protein is DNA repair protein RecO.